The chain runs to 354 residues: Abasic site processing protein HMCES (354 aa).

Residue Cys-2 is the Nucleophile of the active site. Position 2 is a thiazolidine linkage to a ring-opened DNA abasic site (Cys-2). The active site involves Glu-127. Residues Lys-148 and Lys-151 each participate in a glycyl lysine isopeptide (Lys-Gly) (interchain with G-Cter in SUMO2) cross-link. Residue Ser-160 is modified to Phosphoserine. Lys-276 participates in a covalent cross-link: Glycyl lysine isopeptide (Lys-Gly) (interchain with G-Cter in SUMO2). Residues 292 to 354 are disordered; the sequence is ATKSPKKEDS…EPVAKRPYSQ (63 aa). The residue at position 295 (Ser-295) is a Phosphoserine. Basic and acidic residues predominate over residues 296 to 309; the sequence is PKKEDSKTPQKEES. Residue Lys-306 forms a Glycyl lysine isopeptide (Lys-Gly) (interchain with G-Cter in SUMO2) linkage. At Ser-322 the chain carries Phosphoserine. Positions 332–338 match the PIP-box motif; it reads GLLEQWL. Residues 337-348 show a composition bias toward basic and acidic residues; the sequence is WLKREKEEEPVA. Glycyl lysine isopeptide (Lys-Gly) (interchain with G-Cter in SUMO2) cross-links involve residues Lys-339 and Lys-342.

Belongs to the SOS response-associated peptidase family. In terms of assembly, interacts (via PIP-box motif) with PCNA. Ubiquitinated; the covalent HMCES DNA-protein cross-link is ubiquitinated, leading to its degradation by the proteasome.

It is found in the chromosome. With respect to regulation, formation and reversal of DNA-protein cross-link depends on DNA context. Catalyzes formation of the thiazolidine linkage in presence of abasic sites in single-stranded DNA. Mediates the reversal of the thiazolidine cross-link in presence of double stranded DNA. Its function is as follows. Sensor of abasic sites in single-stranded DNA (ssDNA) required to preserve genome integrity by promoting error-free repair of abasic sites. Acts as an enzyme that recognizes and binds abasic sites in ssDNA at replication forks and chemically modifies the lesion by forming a covalent cross-link with DNA: forms a stable thiazolidine linkage between a ring-opened abasic site and the alpha-amino and sulfhydryl substituents of its N-terminal catalytic cysteine residue. Promotes error-free repair by protecting abasic sites from translesion synthesis (TLS) polymerases and endonucleases that are error-prone and would generate mutations and double-strand breaks. The HMCES DNA-protein cross-link is then either reversed or degraded. HMCES is able to catalyze the reversal of its thiazolidine cross-link and cycle between a cross-link and a non-cross-linked state depending on DNA context: mediates self-reversal of the thiazolidine cross-link in double stranded DNA, allowing APEX1 to initiate downstream repair of abasic sites. The HMCES DNA-protein cross-link can also be degraded by the SPRTN metalloprotease following unfolding by the BRIP1/FANCJ helicase. Has preference for ssDNA, but can also accommodate double-stranded DNA with 3' or 5' overhang (dsDNA), and dsDNA-ssDNA 3' junction. Plays a protective role during somatic hypermutation of immunoglobulin genes in B-cells: acts via its ability to form covalent cross-links with abasic sites, thereby limiting the accumulation of deletions in somatic hypermutation target regions. Also involved in class switch recombination (CSR) in B-cells independently of the formation of a DNA-protein cross-link: acts by binding and protecting ssDNA overhangs to promote DNA double-strand break repair through the microhomology-mediated alternative-end-joining (Alt-EJ) pathway. Acts as a protease: mediates autocatalytic processing of its N-terminal methionine in order to expose the catalytic cysteine. The chain is Abasic site processing protein HMCES from Pongo abelii (Sumatran orangutan).